Consider the following 592-residue polypeptide: Arginine--tRNA ligase (592 aa).

The 'HIGH' region motif lies at 134–144 (ANPTGPLHVGH).

This sequence belongs to the class-I aminoacyl-tRNA synthetase family. Monomer.

Its subcellular location is the cytoplasm. It catalyses the reaction tRNA(Arg) + L-arginine + ATP = L-arginyl-tRNA(Arg) + AMP + diphosphate. The chain is Arginine--tRNA ligase from Coxiella burnetii (strain CbuK_Q154) (Coxiella burnetii (strain Q154)).